We begin with the raw amino-acid sequence, 330 residues long: Zinc finger protein Gfi-1b (330 aa).

Residues Met-1–Ala-20 form an SNAG domain region. Disordered regions lie at residues Met-1–Gln-21 and Met-75–Pro-99. Lys-8 carries the post-translational modification N6,N6-dimethyllysine. The segment at Gly-91 to Lys-330 is interaction with ARIH2. 6 consecutive C2H2-type zinc fingers follow at residues Tyr-163–His-186, Phe-192–His-214, Phe-220–His-242, Tyr-248–His-270, His-276–His-298, and Phe-304–His-327. Residues His-164–Lys-330 are mediates interaction with GATA1.

In terms of assembly, interacts with histone methyltransferases EHMT2 and SUV39H1. Interacts with ARIH2 (via RING-type 2) and with RUNX1T1. Forms a complex with GATA1. Component of a RCOR-GFI-KDM1A-HDAC complex. Interacts directly with RCOR1, KDM1A and HDAC2. Methylation at Lys-8 in the SNAG domain seems required for the recruitment of the corepressor complex. In terms of tissue distribution, expressed in bone marrow and in spleen. Detected in hematopoietic stem cells, erythroblasts, and megakaryocytes. Expressed in thymocytes.

The protein resides in the nucleus. Essential proto-oncogenic transcriptional regulator necessary for development and differentiation of erythroid and megakaryocytic lineages. Component of a RCOR-GFI-KDM1A-HDAC complex that suppresses, via histone deacetylase (HDAC) recruitment, a number of genes implicated in multilineage blood cell development and controls hematopoietic differentiation. Transcriptional repressor or activator depending on both promoter and cell type context; represses promoter activity of SOCS1 and SOCS3 and thus, may regulate cytokine signaling pathways. Cooperates with GATA1 to repress target gene transcription, such as the apoptosis regulator BCL2L1; GFI1B silencing in leukemic cell lines markedly increase apoptosis rate. Inhibits down-regulation of MYC and MYB as well as the cyclin-dependent kinase inhibitor CDKN1A/P21WAF1 in IL6-treated myelomonocytic cells. Represses expression of GATA3 in T-cell lymphomas and inhibits GATA1-mediated transcription; as GATA1 also mediates erythroid GFI1B transcription, both GATA1 and GFI1B participate in a feedback regulatory pathway controlling the expression of GFI1B gene in erythroid cells. Suppresses GATA1-mediated stimulation of GFI1B promoter through protein interaction. Binds to gamma-satellite DNA and to its own promoter, auto-repressing its own expression. Alters histone methylation by recruiting histone methyltransferase to target genes promoters. Plays a role in heterochromatin formation. In Mus musculus (Mouse), this protein is Zinc finger protein Gfi-1b (Gfi1b).